We begin with the raw amino-acid sequence, 510 residues long: Aspartate kinase FUB3 (510 aa).

ACT domains are found at residues 372 to 440 (ILSN…VLPD) and 446 to 510 (LVGA…KNAM).

It belongs to the aspartokinase family.

It carries out the reaction L-aspartate + ATP = 4-phospho-L-aspartate + ADP. Its pathway is mycotoxin biosynthesis. Aspartate kinase; part of the gene cluster that mediates the biosynthesis of fusaric acid, a mycotoxin with low to moderate toxicity to animals and humans, but with high phytotoxic properties. L-aspartate is suggested as fusaric acid amino acid precursor that is activated and further processed to O-acetyl-L-homoserine by cluster enzymes aspartate kinase FUB3 and homoserine O-acetyltransferase FUB5, as well as enzymes of the primary metabolism. The polyketide synthase (PKS) FUB1 generates the triketide trans-2-hexenal which is presumptively released by the hydrolase FUB4 and linked to the NRPS-bound amino acid precursor by NAD(P)-dependent dehydrogenase FUB6. FUB1, FUB4, and the non-canonical NRPS Fub8 may form an enzyme complex. Further processing of the NRPS-bound intermediate might be carried out by FUB6 and the sulfhydrylase FUB7, enabling a spontaneous electrocyclization to close the carbon backbone of fusaric acid. Dihydrofusaric acid is likely to be released via reduction by the thioester reductase (TR) domain of FUB8 whereupon the final oxidation to fusaric acid may (also) be performed by the FMN-dependent dehydrogenase FUB9. The chain is Aspartate kinase FUB3 from Gibberella moniliformis (strain M3125 / FGSC 7600) (Maize ear and stalk rot fungus).